Consider the following 151-residue polypeptide: MSKSSEEKMENKEVLNINSFNISEFCNAEEGSNFIHFKPCEICKRAILDPINVADTSRLLQVNVALRNVCIGKELTVGCILIDRTGTVLAFKSQTFTVGHGGSGCGCSEDKHGSPCTNTSRRFSFILPTRDLCSSMDLKVKIIANYTHPCN.

The protein localises to the spore wall. This Clostridium sporogenes (strain ATCC 15579) protein is Exosporium protein B.